We begin with the raw amino-acid sequence, 544 residues long: Involucrin (544 aa).

Residues 1 to 520 (MSQQHTLPVT…GQVQGIQQAL (520 aa)) are disordered. Residues 76-90 (EQQQQPQEQKLQQQH) show a composition bias toward low complexity. 9 stretches are compositionally biased toward basic and acidic residues: residues 96–117 (EHQK…REKQ), 124–152 (EEEK…KEQL), 202–234 (QLKH…KQSE), 252–271 (QLKH…HQEG), 283–297 (KHLE…HPEQ), 304–347 (QLEE…HPEQ), 354–411 (QLEE…REEQ), 423–437 (KHLE…HPEQ), and 462–476 (KHLE…HPEQ). The segment covering 477–494 (QEGQLKPQEQQEGQLKGL) has biased composition (low complexity).

It belongs to the involucrin family. As to quaternary structure, directly or indirectly cross-linked to cornifelin (CNFN). In terms of processing, substrate of transglutaminase. Specific glutamines or lysines are cross-linked to keratins, desmoplakin and to inter involucrin molecules. In terms of tissue distribution, keratinocytes of epidermis and other stratified squamous epithelia.

Its subcellular location is the cytoplasm. Its function is as follows. Part of the insoluble cornified cell envelope (CE) of stratified squamous epithelia. The chain is Involucrin (IVL) from Aotus trivirgatus (Three-striped night monkey).